A 372-amino-acid polypeptide reads, in one-letter code: Cyanuric acid amidohydrolase (372 aa).

The tract at residues 1-105 is RU A; it reads MPTTLRRAHV…IVFEAREVDE (105 aa). Residues Arg56 and 84-85 each bind substrate; that span reads SG. An RU B region spans residues 115 to 252; that stretch reads SLALGRARTP…HEIMVAGMSR (138 aa). Residue Lys165 is part of the active site. Residues Arg197 and 235–236 each bind substrate; that span reads SG. Ser235 functions as the Nucleophile in the catalytic mechanism. Residues 258–372 form an RU C region; it reads LAIDHGVMRD…GPVAIIVERT (115 aa). Position 305 (Glu305) interacts with Mg(2+). Residues Arg332 and 351-352 each bind substrate; that span reads SG. Mg(2+) is bound by residues Ala354, Gln357, Gly358, Pro359, and Gly362.

The protein belongs to the cyclic amide hydrolase (CyAH) family. As to quaternary structure, homotetramer.

It catalyses the reaction cyanurate + H2O = 1-carboxybiuret + H(+). The protein operates within xenobiotic degradation; atrazine degradation; biuret from cyanurate: step 1/1. With respect to regulation, inhibited by barbituric acid. In terms of biological role, responsible for the hydrolysis of cyanuric acid, an intermediate formed during catabolism of s-triazine based compounds in herbicides such as atrazine and polymers such as melamine. Catalyzes the hydrolytic opening of the s-triazine ring of cyanuric acid (2,4,6-trihydroxy-s-triazine) to yield carbon dioxide and carboxybiuret, which spontaneously decarboxylates to biuret. The protein is Cyanuric acid amidohydrolase of Bradyrhizobium sp. (strain ORS 375).